The primary structure comprises 434 residues: 5-methylthioadenosine/S-adenosylhomocysteine deaminase (434 aa).

Zn(2+) is bound by residues His-66 and His-68. The substrate site is built by Glu-95, Arg-148, and His-188. Residue His-215 participates in Zn(2+) binding. Substrate-binding residues include Glu-218 and Asp-304. Asp-304 contributes to the Zn(2+) binding site.

Belongs to the metallo-dependent hydrolases superfamily. MTA/SAH deaminase family. It depends on Zn(2+) as a cofactor.

The catalysed reaction is S-adenosyl-L-homocysteine + H2O + H(+) = S-inosyl-L-homocysteine + NH4(+). It catalyses the reaction S-methyl-5'-thioadenosine + H2O + H(+) = S-methyl-5'-thioinosine + NH4(+). Functionally, catalyzes the deamination of 5-methylthioadenosine and S-adenosyl-L-homocysteine into 5-methylthioinosine and S-inosyl-L-homocysteine, respectively. Is also able to deaminate adenosine. The chain is 5-methylthioadenosine/S-adenosylhomocysteine deaminase from Shouchella clausii (strain KSM-K16) (Alkalihalobacillus clausii).